Consider the following 205-residue polypeptide: Proteasome subunit beta type-3 (205 aa).

This sequence belongs to the peptidase T1B family. In terms of assembly, the 26S proteasome consists of a 20S proteasome core and two 19S regulatory subunits. The 20S proteasome core is composed of 28 subunits that are arranged in four stacked rings, resulting in a barrel-shaped structure. The two end rings are each formed by seven alpha subunits, and the two central rings are each formed by seven beta subunits. The catalytic chamber with the active sites is on the inside of the barrel.

The protein resides in the cytoplasm. It localises to the nucleus. In terms of biological role, non-catalytic component of the proteasome, a multicatalytic proteinase complex which is characterized by its ability to cleave peptides with Arg, Phe, Tyr, Leu, and Glu adjacent to the leaving group at neutral or slightly basic pH. The proteasome has an ATP-dependent proteolytic activity. The sequence is that of Proteasome subunit beta type-3 (psmB3) from Dictyostelium discoideum (Social amoeba).